The chain runs to 454 residues: MALNVVILAAGKGTRMRSDLPKVLHPIAHKSMVQHVIDTAHSIGSDAIQLVYGYGADKLQASLGEQQLNWVLQAEQLGTGHAVAQASPYIADNDTVLILYGDVPLIQASTLEALLAARPENGVAILTVNLANPTGYGRIVREQGKVVGIIEQKDANPEQLLINEINTGIMAVPGKQLKTWLSRLSNNNAQGEYYLTDIIAMAHADGVAIDTAQPQSAIEVEGANNRVQLAQLERAYQAREAEKLMLAGANLRDPHRIDIRGEVTVGMDVMIDINVIFEGKVILGNNVTIGAGAILIDCEIADGAEIKPYSIIEGAKLGVAASAGPFARLRPGAELKQDAHIGNFVEVKKAIIGVGSKAGHLAYLGDAIIGDGVNIGAGTITCNYDGANKHLTVIEDNVFVGSDTQLVAPVTIGKGATLGAGSTITRDVGENELVITRVKQKHLLDWKRPVKIKK.

The interval 1–226 is pyrophosphorylase; sequence MALNVVILAA…AIEVEGANNR (226 aa). Residues 8-11, Lys22, Gln73, 78-79, 100-102, Gly137, Glu151, Asn166, and Asn224 contribute to the UDP-N-acetyl-alpha-D-glucosamine site; these read LAAG, GT, and YGD. A Mg(2+)-binding site is contributed by Asp102. Residue Asn224 coordinates Mg(2+). The tract at residues 227 to 247 is linker; it reads VQLAQLERAYQAREAEKLMLA. The tract at residues 248-454 is N-acetyltransferase; that stretch reads GANLRDPHRI…DWKRPVKIKK (207 aa). UDP-N-acetyl-alpha-D-glucosamine is bound by residues Arg330 and Lys348. The active-site Proton acceptor is His360. 2 residues coordinate UDP-N-acetyl-alpha-D-glucosamine: Tyr363 and Asn374. Acetyl-CoA-binding positions include Ala377, 383–384, Ser402, Ala420, and Arg437; that span reads NY.

This sequence in the N-terminal section; belongs to the N-acetylglucosamine-1-phosphate uridyltransferase family. It in the C-terminal section; belongs to the transferase hexapeptide repeat family. Homotrimer. Mg(2+) serves as cofactor.

The protein resides in the cytoplasm. The enzyme catalyses alpha-D-glucosamine 1-phosphate + acetyl-CoA = N-acetyl-alpha-D-glucosamine 1-phosphate + CoA + H(+). It carries out the reaction N-acetyl-alpha-D-glucosamine 1-phosphate + UTP + H(+) = UDP-N-acetyl-alpha-D-glucosamine + diphosphate. Its pathway is nucleotide-sugar biosynthesis; UDP-N-acetyl-alpha-D-glucosamine biosynthesis; N-acetyl-alpha-D-glucosamine 1-phosphate from alpha-D-glucosamine 6-phosphate (route II): step 2/2. The protein operates within nucleotide-sugar biosynthesis; UDP-N-acetyl-alpha-D-glucosamine biosynthesis; UDP-N-acetyl-alpha-D-glucosamine from N-acetyl-alpha-D-glucosamine 1-phosphate: step 1/1. It functions in the pathway bacterial outer membrane biogenesis; LPS lipid A biosynthesis. Its function is as follows. Catalyzes the last two sequential reactions in the de novo biosynthetic pathway for UDP-N-acetylglucosamine (UDP-GlcNAc). The C-terminal domain catalyzes the transfer of acetyl group from acetyl coenzyme A to glucosamine-1-phosphate (GlcN-1-P) to produce N-acetylglucosamine-1-phosphate (GlcNAc-1-P), which is converted into UDP-GlcNAc by the transfer of uridine 5-monophosphate (from uridine 5-triphosphate), a reaction catalyzed by the N-terminal domain. This chain is Bifunctional protein GlmU, found in Shewanella putrefaciens (strain CN-32 / ATCC BAA-453).